A 155-amino-acid polypeptide reads, in one-letter code: Protein Smg homolog (155 aa).

This sequence belongs to the Smg family.

This chain is Protein Smg homolog, found in Methylococcus capsulatus (strain ATCC 33009 / NCIMB 11132 / Bath).